A 75-amino-acid chain; its full sequence is Small ribosomal subunit protein bS21B (75 aa).

The segment covering 33-52 (RRSYEKPSERRAREKAEAVR) has biased composition (basic and acidic residues). Residues 33–75 (RRSYEKPSERRAREKAEAVRRARKLARKQAQREGLLPGKKRAA) are disordered.

The protein belongs to the bacterial ribosomal protein bS21 family.

This Chelativorans sp. (strain BNC1) protein is Small ribosomal subunit protein bS21B.